The following is a 517-amino-acid chain: Glycosyltransferase family 92 protein F55C10.4 (517 aa).

The helical transmembrane segment at 9–31 threads the bilayer; it reads FLKYFIIFTFFCVTFCFLKLCLG. In terms of domain architecture, GT92 spans 156–454; the sequence is KPVIFCVSPQ…FKCYNESFYH (299 aa).

Belongs to the glycosyltransferase 92 family.

The protein localises to the membrane. This Caenorhabditis elegans protein is Glycosyltransferase family 92 protein F55C10.4.